A 96-amino-acid chain; its full sequence is Small ribosomal subunit protein bS6 (96 aa).

The protein belongs to the bacterial ribosomal protein bS6 family.

Its function is as follows. Binds together with bS18 to 16S ribosomal RNA. The chain is Small ribosomal subunit protein bS6 (rpsF) from Mycobacterium leprae (strain TN).